We begin with the raw amino-acid sequence, 176 residues long: Vitamin K epoxide reductase complex subunit 1-like protein 1 (176 aa).

Residues 1 to 13 (MAAPVLLRVSVPR) lie on the Cytoplasmic side of the membrane. The helical transmembrane segment at 14-36 (WERVARYAVCAAGILLSIYAYHV) threads the bilayer. Residues 37–87 (EREKERDPEHRALCDLGPWVKCSAALASRWGRGFGLLGSIFGKDGVLNQPN) are Lumenal-facing. The cysteines at positions 50 and 58 are disulfide-linked. Residue N87 coordinates (S)-warfarin. A helical membrane pass occupies residues 88 to 102 (SVFGLIFYILQLLLG). Topologically, residues 103-107 (MTASA) are cytoplasmic. A helical transmembrane segment spans residues 108–135 (VAALVLMTSSIVSVVGSLYLAYILYFVL). At 136–138 (KEF) the chain is on the lumenal side. The cysteines at positions 139 and 142 are disulfide-linked. A helical membrane pass occupies residues 139–160 (CIICVTTYVLNFLLLIINYKRL). Positions 142 and 146 each coordinate phylloquinone. Y146 serves as a coordination point for (S)-warfarin. The Cytoplasmic segment spans residues 161-176 (VYLNEAWKRQLQPKED).

It belongs to the VKOR family. Detected in testis and lung.

The protein resides in the endoplasmic reticulum membrane. The catalysed reaction is phylloquinone + [protein]-disulfide + H2O = 2,3-epoxyphylloquinone + [protein]-dithiol. It catalyses the reaction phylloquinol + [protein]-disulfide = phylloquinone + [protein]-dithiol. Inhibited by warfarin (coumadin). Warfarin locks VKORC1 in both redox states into the closed conformation. In terms of biological role, involved in vitamin K metabolism. Can reduce inactive vitamin K 2,3-epoxide to active vitamin K, and may contribute to vitamin K-mediated protection against oxidative stress. Plays a role in vitamin K-dependent gamma-carboxylation of Glu residues in target proteins. This chain is Vitamin K epoxide reductase complex subunit 1-like protein 1 (Vkorc1l1), found in Mus musculus (Mouse).